A 374-amino-acid chain; its full sequence is 4-hydroxy-3-methylbut-2-en-1-yl diphosphate synthase (flavodoxin) (374 aa).

4 residues coordinate [4Fe-4S] cluster: C270, C273, C305, and E312.

The protein belongs to the IspG family. [4Fe-4S] cluster is required as a cofactor.

The catalysed reaction is (2E)-4-hydroxy-3-methylbut-2-enyl diphosphate + oxidized [flavodoxin] + H2O + 2 H(+) = 2-C-methyl-D-erythritol 2,4-cyclic diphosphate + reduced [flavodoxin]. It participates in isoprenoid biosynthesis; isopentenyl diphosphate biosynthesis via DXP pathway; isopentenyl diphosphate from 1-deoxy-D-xylulose 5-phosphate: step 5/6. Converts 2C-methyl-D-erythritol 2,4-cyclodiphosphate (ME-2,4cPP) into 1-hydroxy-2-methyl-2-(E)-butenyl 4-diphosphate. This chain is 4-hydroxy-3-methylbut-2-en-1-yl diphosphate synthase (flavodoxin), found in Vibrio cholerae serotype O1 (strain ATCC 39315 / El Tor Inaba N16961).